The following is a 493-amino-acid chain: Glutamyl-tRNA(Gln) amidotransferase subunit A (493 aa).

Catalysis depends on charge relay system residues Lys-79 and Ser-159. Ser-183 serves as the catalytic Acyl-ester intermediate.

The protein belongs to the amidase family. GatA subfamily. Heterotrimer of A, B and C subunits.

It carries out the reaction L-glutamyl-tRNA(Gln) + L-glutamine + ATP + H2O = L-glutaminyl-tRNA(Gln) + L-glutamate + ADP + phosphate + H(+). Its function is as follows. Allows the formation of correctly charged Gln-tRNA(Gln) through the transamidation of misacylated Glu-tRNA(Gln) in organisms which lack glutaminyl-tRNA synthetase. The reaction takes place in the presence of glutamine and ATP through an activated gamma-phospho-Glu-tRNA(Gln). This Sinorhizobium fredii (strain NBRC 101917 / NGR234) protein is Glutamyl-tRNA(Gln) amidotransferase subunit A.